The chain runs to 166 residues: 3-isopropylmalate dehydratase small subunit 2 (166 aa).

The protein belongs to the LeuD family. LeuD type 2 subfamily. As to quaternary structure, heterodimer of LeuC and LeuD.

It carries out the reaction (2R,3S)-3-isopropylmalate = (2S)-2-isopropylmalate. It participates in amino-acid biosynthesis; L-leucine biosynthesis; L-leucine from 3-methyl-2-oxobutanoate: step 2/4. In terms of biological role, catalyzes the isomerization between 2-isopropylmalate and 3-isopropylmalate, via the formation of 2-isopropylmaleate. This chain is 3-isopropylmalate dehydratase small subunit 2 (leuD2), found in Thermotoga maritima (strain ATCC 43589 / DSM 3109 / JCM 10099 / NBRC 100826 / MSB8).